The following is a 624-amino-acid chain: Carbon monoxide dehydrogenase (624 aa).

The [4Fe-4S] cluster site is built by C37, C46, C49, C54, and C65. [Ni-4Fe-5S] cluster is bound by residues H256, C292, C336, C444, C475, and C516.

This sequence belongs to the Ni-containing carbon monoxide dehydrogenase family. In terms of assembly, homodimer. [4Fe-4S] cluster serves as cofactor. It depends on [Ni-4Fe-5S] cluster as a cofactor.

The catalysed reaction is CO + 2 oxidized [2Fe-2S]-[ferredoxin] + H2O = 2 reduced [2Fe-2S]-[ferredoxin] + CO2 + 2 H(+). In terms of biological role, CODH oxidizes carbon monoxide coupled, via CooF, to the reduction of a hydrogen cation by a hydrogenase (possibly CooH). The polypeptide is Carbon monoxide dehydrogenase (cooS) (Methanocaldococcus jannaschii (strain ATCC 43067 / DSM 2661 / JAL-1 / JCM 10045 / NBRC 100440) (Methanococcus jannaschii)).